A 493-amino-acid chain; its full sequence is MTIEGGPKRSQKVVFLQPVLTSLVALLAAGACLSPTVALAQDQLSPDEVAALRSEIATLRAQLQKMEQRLDAVTSAPQTTAPAAPPAIQPPAPVATTVAKASPPPAKPASAPTEITWKGSPQFTSGDRSFKAKGRIQIDVGQVDAPKGLVDRGLGYGAEMRRIRLGGEGDLGAGVGYELELELSDNAVKLVDTFVTYRTGPWLVTVGNHNPFQSLDELTGDTVGAFMERAAFTDAFNFERRLGVSAQYEKGPWVLQGGLFADDIDALSNSSDGPEGGDENNSYGLDGRAVYAPKLGQTQLHLGASAHWRTLKRVTDAGTRYRQRPYVHASNSRLIGTAVLPVEEEVHYGLEAAFVSGRWHGAAETYWQAAELTTGTRPTFFGGYAELGYFLTGDTRGYRGGQFSRTRPSKPLGGGGVGALQLNVRYDYLDLNDRGVVGGKQDAWLAALIWQPLDHLRFHLNYGLLDYQGATPLRNGDRDYRVNVAGARMELDF.

Positions 96 to 124 are disordered; sequence TTVAKASPPPAKPASAPTEITWKGSPQFT.

This is an uncharacterized protein from Caulobacter vibrioides (strain ATCC 19089 / CIP 103742 / CB 15) (Caulobacter crescentus).